We begin with the raw amino-acid sequence, 446 residues long: Transcription factor SOX-3 (446 aa).

Disordered regions lie at residues Pro-29–Gln-48 and Pro-87–Lys-140. Composition is skewed to gly residues over residues Gly-96 to Gly-107 and Ala-117 to Thr-134. The HMG box DNA-binding region spans Val-139–Lys-207. A 9aaTAD motif is present at residues Asp-399 to Pro-407.

In terms of assembly, interacts with SOX2 and FGFR1.

The protein localises to the nucleus. Functionally, transcription factor required during the formation of the hypothalamo-pituitary axis. May function as a switch in neuronal development. Keeps neural cells undifferentiated by counteracting the activity of proneural proteins and suppresses neuronal differentiation. Required also within the pharyngeal epithelia for craniofacial morphogenesis. Controls a genetic switch in male development. Is necessary for initiating male sex determination by directing the development of supporting cell precursors (pre-Sertoli cells) as Sertoli rather than granulosa cells. This Homo sapiens (Human) protein is Transcription factor SOX-3 (SOX3).